We begin with the raw amino-acid sequence, 511 residues long: MAFQQGVLSRCSGVFRHHVGHSRHINNILYRHAIAFASIAPRIPKSSFHTSAIRNNEAFKDPYDTLGLKKSATGAEIKKAYYKLAKKYHPDINKEPDAEKKFHDLQNAYEILSDETKRQQYDQFGPAAFGGGGAAGGAGGGSGSPFGSQFHDFSGFTSAGGSPFGGINFEDLFGAAFGGGGRGSGGASRSSSMFRQYRGDPIEIVHKVSFKDAVFGSKNVQLRFSALDPCSTCSGTGMKPNTHKVSCSTCHGTGTTVHIRGGFQMMSTCPTCNGEGTMKRPQDNCTKCHGEGVQVNRAKTITVDLPHGLQDGDVVRIPGQGSYPDIAVEADLKDSVKLSRGDILVRIRVDKDPNFSIKNKYDIWYDKEIPITTAALGGTVTIPTVEGQKIRIKVAPGTQYNQVISIPNMGVPKTSTIRGDMKVQYKIVVKKPQSLAEKCLWEALADVTNDDMAKKTMQPGTAAGTAINEEILKKQKQEEEKHAKKDDDNTLKRLENFITNTFRKIKGDKKN.

The transit peptide at 1–55 directs the protein to the mitochondrion; sequence MAFQQGVLSRCSGVFRHHVGHSRHINNILYRHAIAFASIAPRIPKSSFHTSAIRN. Residues 59-127 enclose the J domain; it reads FKDPYDTLGL…RQQYDQFGPA (69 aa). The segment at 217-297 adopts a CR-type zinc-finger fold; that stretch reads SKNVQLRFSA…CHGEGVQVNR (81 aa). CXXCXGXG motif repeat units lie at residues 230–237, 247–254, 269–276, and 285–292; these read CSTCSGTG, CSTCHGTG, CPTCNGEG, and CTKCHGEG.

It is found in the mitochondrion. Functionally, plays a role in mitochondrial biogenesis and protein folding. This chain is DnaJ homolog 1, mitochondrial (MDJ1), found in Saccharomyces cerevisiae (strain ATCC 204508 / S288c) (Baker's yeast).